Reading from the N-terminus, the 109-residue chain is Small ribosomal subunit protein uS10 (109 aa).

Belongs to the universal ribosomal protein uS10 family. Part of the 30S ribosomal subunit.

Involved in the binding of tRNA to the ribosomes. This chain is Small ribosomal subunit protein uS10, found in Koribacter versatilis (strain Ellin345).